Here is a 351-residue protein sequence, read N- to C-terminus: Hydroxymethylglutaryl-CoA synthase (351 aa).

Residue D30 participates in (3S)-3-hydroxy-3-methylglutaryl-CoA binding. E82 functions as the Proton donor/acceptor in the catalytic mechanism. Positions 114, 155, 203, and 236 each coordinate (3S)-3-hydroxy-3-methylglutaryl-CoA. The active-site Acyl-thioester intermediate is C114. Catalysis depends on H236, which acts as the Proton donor/acceptor. R241 provides a ligand contact to CoA. R245, N268, and S298 together coordinate (3S)-3-hydroxy-3-methylglutaryl-CoA.

This sequence belongs to the thiolase-like superfamily. Archaeal HMG-CoA synthase family. As to quaternary structure, interacts with acetoacetyl-CoA thiolase that catalyzes the precedent step in the pathway and with a DUF35 protein. The acetoacetyl-CoA thiolase/HMG-CoA synthase complex channels the intermediate via a fused CoA-binding site, which allows for efficient coupling of the endergonic thiolase reaction with the exergonic HMGCS reaction.

The enzyme catalyses acetoacetyl-CoA + acetyl-CoA + H2O = (3S)-3-hydroxy-3-methylglutaryl-CoA + CoA + H(+). It participates in metabolic intermediate biosynthesis; (R)-mevalonate biosynthesis; (R)-mevalonate from acetyl-CoA: step 2/3. Catalyzes the condensation of acetyl-CoA with acetoacetyl-CoA to form 3-hydroxy-3-methylglutaryl-CoA (HMG-CoA). Functions in the mevalonate (MVA) pathway leading to isopentenyl diphosphate (IPP), a key precursor for the biosynthesis of isoprenoid compounds that are building blocks of archaeal membrane lipids. In Pyrobaculum neutrophilum (strain DSM 2338 / JCM 9278 / NBRC 100436 / V24Sta) (Thermoproteus neutrophilus), this protein is Hydroxymethylglutaryl-CoA synthase.